Here is a 528-residue protein sequence, read N- to C-terminus: O-methylsterigmatocystin oxidoreductase (528 aa).

Cys-440 lines the heme pocket.

This sequence belongs to the cytochrome P450 family. The cofactor is heme.

The catalysed reaction is 8-O-methylsterigmatocystin + 2 reduced [NADPH--hemoprotein reductase] + 2 O2 = aflatoxin B1 + methanol + 2 oxidized [NADPH--hemoprotein reductase] + CO2 + H2O + 2 H(+). It carries out the reaction 8-O-methyldihydrosterigmatocystin + 2 reduced [NADPH--hemoprotein reductase] + 2 O2 = aflatoxin B2 + methanol + 2 oxidized [NADPH--hemoprotein reductase] + CO2 + H2O + 2 H(+). It functions in the pathway mycotoxin biosynthesis; aflatoxin biosynthesis. Converts O-methylsterigmatocystin (OMST) to aflatoxin B1 and converts dihydro-O-methylsterigmatocystin (DHOMST) to aflatoxin B2 in the aflatoxin biosynthesis pathway. The chain is O-methylsterigmatocystin oxidoreductase (ordA) from Aspergillus flavus.